Consider the following 552-residue polypeptide: MSEAEARPTNFIRQIIDEDLASGKHDHIQTRFPPEPNGYLHIGHAKSICLNFGIARDYQGQCNLRFDDTNPVKEDIEYVESIKRDVEWLGFSWSGDVRYSSDYFDQLHAYAVELIGKGLAYVDELTPEQIREYRGTLTAPGKNSPYRDRTVQENLALFEKMRNGGFAEGTACLRAKIDMASSFIVMRDPVLYRIKFADHHQTGNKWCIYPMYDFTHCISDALEGITHSLCTLEFQDNRRLYDWVLDNISIPCHPRQYEFSRLNLEYAIMSKRKLNQLVVENVVEGWDDPRMPTISGLRRRGYSASSIREFCVRIGVTKQDNNVEMAALESCIRDDLNENAPRAMAVLDPVKVVIENLPAGHEEFVAMPNHPNKPEMGSRQVAFSREVYIDRADFREEANKQYKRLVLGKEVRLRNAYVIKADRIEKDEQGTITTIYCSYDAETLSKDPADGRKVKGVIHWVSAAHAVPAEFRLYDRLFSVANPAAADDFLSTINPDSLKITQGFVEASLVQAEVEKAYQFEREGYFCADRVYSSAEHLVFNRTVGLRDTWVG.

The short motif at 34–44 (PEPNGYLHIGH) is the 'HIGH' region element. ATP contacts are provided by residues 35-37 (EPN) and 41-47 (HIGHAKS). Positions 67 and 212 each coordinate L-glutamine. ATP is bound by residues threonine 231, 261 to 262 (RL), and 269 to 271 (MSK). The 'KMSKS' region signature appears at 268 to 272 (IMSKR).

The protein belongs to the class-I aminoacyl-tRNA synthetase family. As to quaternary structure, monomer.

The protein resides in the cytoplasm. The catalysed reaction is tRNA(Gln) + L-glutamine + ATP = L-glutaminyl-tRNA(Gln) + AMP + diphosphate. The sequence is that of Glutamine--tRNA ligase from Pectobacterium atrosepticum (strain SCRI 1043 / ATCC BAA-672) (Erwinia carotovora subsp. atroseptica).